Reading from the N-terminus, the 846-residue chain is FNIP repeat-containing protein DDB_G0289381 (846 aa).

The segment covering Met-1–Ser-11 has biased composition (basic residues). The disordered stretch occupies residues Met-1–Asp-39. The segment covering Asp-20–Lys-33 has biased composition (basic and acidic residues). FNIP repeat units follow at residues Ile-159–Lys-193, Phe-194–Asn-239, Phe-240–Asn-283, and Phe-284–Asp-325. The segment at Ser-362–Thr-384 is disordered. FNIP repeat units follow at residues Phe-458–Gly-500, Phe-501–Ser-546, and Phe-654–Lys-693. Residues Ser-702–Ser-734 form a disordered region. Residues Ser-702–Ser-734 adopt a coiled-coil conformation.

The sequence is that of FNIP repeat-containing protein DDB_G0289381 from Dictyostelium discoideum (Social amoeba).